A 403-amino-acid chain; its full sequence is MFACDELLLNASTIDATGLQLSNQAIVIKKGRIEWCGSEDQLPAHFQESAKSRKDCHGQLITPGLIDCHTHLVYAGHRAAEFRLKLQGVSYADIAKSGGGILSTVQMTRDASEEELIDQSLPRLLALKNEGVTTVEIKSGYGLDLQNELKMLKVARQLGEMAGVRVKTTFLGAHAVGPEFKGNSQAYVDFLCNEMLPAAKNMDLVDTVDVFCESIAFSIRQAEQIFQAAKDLNLPIKCHAEQLSNMGASSLAARYGALSCDHLEFLDENGALNMVKANTVAVLLPGAFYFLKEKQKPPVDLLRQVGVGMAIATDSNPGSSPTTSLLLMMSMACQFFSMSIPEVLSAVTYQASRALGMEKDIGSIEAGKIADLVLWSIKDSAALCYYFAYPLPHQTMVAGEWVS.

Fe(3+) contacts are provided by His69 and His71. Zn(2+) is bound by residues His69 and His71. Residues Arg78, Tyr141, and His174 each coordinate 4-imidazolone-5-propanoate. Tyr141 serves as a coordination point for N-formimidoyl-L-glutamate. Residue His239 coordinates Fe(3+). Zn(2+) is bound at residue His239. Gln242 contacts 4-imidazolone-5-propanoate. Asp314 is a binding site for Fe(3+). Residue Asp314 coordinates Zn(2+). Residues Asn316 and Gly318 each coordinate N-formimidoyl-L-glutamate. A 4-imidazolone-5-propanoate-binding site is contributed by Ser319.

It belongs to the metallo-dependent hydrolases superfamily. HutI family. Zn(2+) is required as a cofactor. It depends on Fe(3+) as a cofactor.

It localises to the cytoplasm. It carries out the reaction 4-imidazolone-5-propanoate + H2O = N-formimidoyl-L-glutamate. It functions in the pathway amino-acid degradation; L-histidine degradation into L-glutamate; N-formimidoyl-L-glutamate from L-histidine: step 3/3. In terms of biological role, catalyzes the hydrolytic cleavage of the carbon-nitrogen bond in imidazolone-5-propanoate to yield N-formimidoyl-L-glutamate. It is the third step in the universal histidine degradation pathway. This Legionella pneumophila (strain Corby) protein is Imidazolonepropionase.